A 283-amino-acid polypeptide reads, in one-letter code: S-methyl-5'-thioadenosine phosphorylase (283 aa).

Residue T18 participates in phosphate binding. K51 is subject to N6-acetyllysine. Residues 60–61 (RH) and 93–94 (TA) contribute to the phosphate site. M196 is a substrate binding site. T197 serves as a coordination point for phosphate. Residue 220–222 (DYD) participates in substrate binding.

Belongs to the PNP/MTAP phosphorylase family. MTAP subfamily. In terms of assembly, homotrimer.

It is found in the cytoplasm. The protein localises to the nucleus. It carries out the reaction S-methyl-5'-thioadenosine + phosphate = 5-(methylsulfanyl)-alpha-D-ribose 1-phosphate + adenine. It participates in amino-acid biosynthesis; L-methionine biosynthesis via salvage pathway; S-methyl-5-thio-alpha-D-ribose 1-phosphate from S-methyl-5'-thioadenosine (phosphorylase route): step 1/1. Its function is as follows. Catalyzes the reversible phosphorylation of S-methyl-5'-thioadenosine (MTA) to adenine and 5-methylthioribose-1-phosphate. Involved in the breakdown of MTA, a major by-product of polyamine biosynthesis. Responsible for the first step in the methionine salvage pathway after MTA has been generated from S-adenosylmethionine. Has broad substrate specificity with 6-aminopurine nucleosides as preferred substrates. This is S-methyl-5'-thioadenosine phosphorylase from Bos taurus (Bovine).